We begin with the raw amino-acid sequence, 167 residues long: Phospholipase A and acyltransferase 1 (167 aa).

Over 1–138 the chain is Cytoplasmic; the sequence is MAVNDCFSLT…GEGVSEQANR (138 aa). The LRAT domain occupies 20–135; the sequence is LIEVFRPCYQ…LRYGEGVSEQ (116 aa). Residue His30 is part of the active site. Catalysis depends on Cys119, which acts as the Acyl-thioester intermediate. Residues 139 to 159 form a helical membrane-spanning segment; that stretch reads AIGTIGLVAAGIDIFTFLGLF. At 160 to 167 the chain is on the lumenal side; the sequence is PKRQRTKY.

It belongs to the H-rev107 family. In terms of tissue distribution, expressed in skeletal muscle, heart, brain, bone marrow and testis. Abundantly expressed in brain, heart, and skeletal muscle.

It localises to the membrane. The protein resides in the cytoplasm. The protein localises to the nucleus. The enzyme catalyses a 1,2-diacyl-sn-glycero-3-phosphocholine + H2O = a 1-acyl-sn-glycero-3-phosphocholine + a fatty acid + H(+). The catalysed reaction is a 1,2-diacyl-sn-glycero-3-phosphocholine + H2O = a 2-acyl-sn-glycero-3-phosphocholine + a fatty acid + H(+). It carries out the reaction 1,2-dihexadecanoyl-sn-glycero-3-phosphocholine + H2O = 2-hexadecanoyl-sn-glycero-3-phosphocholine + hexadecanoate + H(+). It catalyses the reaction 1,2-dihexadecanoyl-sn-glycero-3-phosphocholine + H2O = 1-hexadecanoyl-sn-glycero-3-phosphocholine + hexadecanoate + H(+). The enzyme catalyses 1-hexadecanoyl-2-(5Z,8Z,11Z,14Z-eicosatetraenoyl)-sn-glycero-3-phosphoethanolamine + H2O = 2-(5Z,8Z,11Z,14Z)-eicosatetraenoyl-sn-glycero-3-phosphoethanolamine + hexadecanoate + H(+). The catalysed reaction is 1-hexadecanoyl-2-(5Z,8Z,11Z,14Z-eicosatetraenoyl)-sn-glycero-3-phosphoethanolamine + H2O = 1-hexadecanoyl-sn-glycero-3-phosphoethanolamine + (5Z,8Z,11Z,14Z)-eicosatetraenoate + H(+). It carries out the reaction 1,2-di-(9Z-octadecenoyl)-sn-glycero-3-phosphoethanolamine + 1,2-dihexadecanoyl-sn-glycero-3-phosphocholine = hexadecanoyl-sn-glycero-3-phosphocholine + N-hexadecanoyl-1,2-di-(9Z-octadecenoyl)-sn-glycero-3-phosphoethanolamine + H(+). It catalyses the reaction 1,2-dihexadecanoyl-sn-glycero-3-phosphocholine + a 2-acyl-sn-glycero-3-phosphocholine = a 1-hexadecanoyl-2-acyl-sn-glycero-3-phosphocholine + 2-hexadecanoyl-sn-glycero-3-phosphocholine. Its function is as follows. Exhibits both phospholipase A1/2 and acyltransferase activities. Shows phospholipase A1 (PLA1) and A2 (PLA2) activity, catalyzing the calcium-independent release of fatty acids from the sn-1 or sn-2 position of glycerophospholipids. Shows O-acyltransferase activity, catalyzing the transfer of a fatty acyl group from glycerophospholipid to the hydroxyl group of lysophospholipid. Shows N-acyltransferase activity, catalyzing the calcium-independent transfer of a fatty acyl group at the sn-1 position of phosphatidylcholine (PC) and other glycerophospholipids to the primary amine of phosphatidylethanolamine (PE), forming N-acylphosphatidylethanolamine (NAPE), which serves as precursor for N-acylethanolamines (NAEs). The protein is Phospholipase A and acyltransferase 1 of Mus musculus (Mouse).